Reading from the N-terminus, the 124-residue chain is Aspartate 1-decarboxylase (124 aa).

Catalysis depends on S25, which acts as the Schiff-base intermediate with substrate; via pyruvic acid. S25 carries the post-translational modification Pyruvic acid (Ser). T57 serves as a coordination point for substrate. The Proton donor role is filled by Y58. 73-75 contacts substrate; that stretch reads GAA.

This sequence belongs to the PanD family. Heterooctamer of four alpha and four beta subunits. Requires pyruvate as cofactor. Is synthesized initially as an inactive proenzyme, which is activated by self-cleavage at a specific serine bond to produce a beta-subunit with a hydroxyl group at its C-terminus and an alpha-subunit with a pyruvoyl group at its N-terminus.

It is found in the cytoplasm. It carries out the reaction L-aspartate + H(+) = beta-alanine + CO2. Its pathway is cofactor biosynthesis; (R)-pantothenate biosynthesis; beta-alanine from L-aspartate: step 1/1. Its function is as follows. Catalyzes the pyruvoyl-dependent decarboxylation of aspartate to produce beta-alanine. This is Aspartate 1-decarboxylase from Clostridium botulinum (strain Alaska E43 / Type E3).